The primary structure comprises 62 residues: Large ribosomal subunit protein bL28 (62 aa).

Residues M1–R27 form a disordered region. Positions R10 to R27 are enriched in basic residues.

Belongs to the bacterial ribosomal protein bL28 family.

This chain is Large ribosomal subunit protein bL28, found in Shouchella clausii (strain KSM-K16) (Alkalihalobacillus clausii).